The primary structure comprises 769 residues: Ligand-dependent nuclear receptor-interacting factor 1 (769 aa).

Glycyl lysine isopeptide (Lys-Gly) (interchain with G-Cter in SUMO2) cross-links involve residues Lys-259 and Lys-279. Residues Gln-378–Pro-387 show a composition bias toward polar residues. The tract at residues Gln-378–Ser-400 is disordered. Phosphoserine occurs at positions 402, 430, and 436. Residue Lys-446 forms a Glycyl lysine isopeptide (Lys-Gly) (interchain with G-Cter in SUMO2) linkage. Residue Ser-502 is modified to Phosphoserine. A disordered region spans residues Asp-528–Leu-562. A PxVxL motif motif is present at residues Leu-580–Leu-584. Ser-599 carries the post-translational modification Phosphoserine. A Glycyl lysine isopeptide (Lys-Gly) (interchain with G-Cter in SUMO2) cross-link involves residue Lys-605. 2 consecutive short sequence motifs (nuclear localization signal) follow at residues Lys-628–Lys-631 and Lys-642–Lys-645. A Glycyl lysine isopeptide (Lys-Gly) (interchain with G-Cter in SUMO2) cross-link involves residue Lys-702. A Phosphothreonine modification is found at Thr-732. Residues Ile-740–Lys-769 adopt a coiled-coil conformation.

Belongs to the LRIF1 family. Interacts with RARA. Interacts with SMCHD1; leading to recruitment to inactivated chromosome X in females. Interacts (via PxVxL motif) with HP1 (CBX1/HP1-beta, CBX3/HP1-gamma and CBX5/HP1-alpha). Widely expressed, with the highest expression levels in heart, liver and placenta.

It localises to the chromosome. The protein localises to the nucleus matrix. Functionally, together with SMCHD1, involved in chromosome X inactivation in females by promoting the compaction of heterochromatin. Also able to repress the ligand-induced transcriptional activity of retinoic acid receptor alpha (RARA), possibly through direct recruitment of histone deacetylases. Also required for silencing of the DUX4 locus in somatic cells. The sequence is that of Ligand-dependent nuclear receptor-interacting factor 1 from Homo sapiens (Human).